We begin with the raw amino-acid sequence, 188 residues long: Probable manganese efflux pump MntP (188 aa).

5 helical membrane passes run 3-23, 66-86, 106-128, 143-163, and 168-188; these read ITAT…ASVG, LEWN…RMII, WLLV…GLAF, ATLI…SIIG, and ILGG…HFHG.

It belongs to the MntP (TC 9.B.29) family.

It is found in the cell inner membrane. Probably functions as a manganese efflux pump. In Shigella sonnei (strain Ss046), this protein is Probable manganese efflux pump MntP.